A 148-amino-acid polypeptide reads, in one-letter code: MKCPYCSAPDSKVVNSRPSDDGASIRRRRECLNCARRFTTYERAQLEPLMVVKRSGPREAFNPDKLLRGLTLATEKRPVDADALRAFAYGFEDDVQASEIHSEEIGKRAMTFLRPLDDVAYIRFASVYRDFDSLERFIEEIRGLKDQS.

A disordered region spans residues 1 to 22; the sequence is MKCPYCSAPDSKVVNSRPSDDG. A zinc finger spans residues 3–34; that stretch reads CPYCSAPDSKVVNSRPSDDGASIRRRRECLNC. The 88-residue stretch at 49 to 136 folds into the ATP-cone domain; it reads LMVVKRSGPR…VYRDFDSLER (88 aa).

Belongs to the NrdR family. Zn(2+) is required as a cofactor.

Negatively regulates transcription of bacterial ribonucleotide reductase nrd genes and operons by binding to NrdR-boxes. This chain is Transcriptional repressor NrdR, found in Deinococcus deserti (strain DSM 17065 / CIP 109153 / LMG 22923 / VCD115).